Consider the following 256-residue polypeptide: Enolase-phosphatase E1 (256 aa).

2 residues coordinate Mg(2+): aspartate 14 and glutamate 16. Residues 142-143 (SS) and lysine 176 each bind substrate. Aspartate 201 contributes to the Mg(2+) binding site.

Belongs to the HAD-like hydrolase superfamily. MasA/MtnC family. As to quaternary structure, monomer. Mg(2+) serves as cofactor.

It is found in the cytoplasm. The protein localises to the nucleus. The enzyme catalyses 5-methylsulfanyl-2,3-dioxopentyl phosphate + H2O = 1,2-dihydroxy-5-(methylsulfanyl)pent-1-en-3-one + phosphate. It functions in the pathway amino-acid biosynthesis; L-methionine biosynthesis via salvage pathway; L-methionine from S-methyl-5-thio-alpha-D-ribose 1-phosphate: step 3/6. The protein operates within amino-acid biosynthesis; L-methionine biosynthesis via salvage pathway; L-methionine from S-methyl-5-thio-alpha-D-ribose 1-phosphate: step 4/6. In terms of biological role, bifunctional enzyme that catalyzes the enolization of 2,3-diketo-5-methylthiopentyl-1-phosphate (DK-MTP-1-P) into the intermediate 2-hydroxy-3-keto-5-methylthiopentenyl-1-phosphate (HK-MTPenyl-1-P), which is then dephosphorylated to form the acireductone 1,2-dihydroxy-3-keto-5-methylthiopentene (DHK-MTPene). This chain is Enolase-phosphatase E1, found in Drosophila simulans (Fruit fly).